The following is a 379-amino-acid chain: Alcohol dehydrogenase 2 (379 aa).

Cys47, Thr49, His69, Cys99, Cys102, Cys105, Cys113, and Cys177 together coordinate Zn(2+). The an alcohol site is built by Thr49 and His69. Thr49 serves as a coordination point for NAD(+). Residues 202-207 (GLGAVG), Asp226, Lys231, Thr272, Val295, 295-297 (VGV), Phe322, and Arg372 contribute to the NAD(+) site.

This sequence belongs to the zinc-containing alcohol dehydrogenase family. Homodimer. Zn(2+) serves as cofactor.

It is found in the cytoplasm. The catalysed reaction is a primary alcohol + NAD(+) = an aldehyde + NADH + H(+). It catalyses the reaction a secondary alcohol + NAD(+) = a ketone + NADH + H(+). This is Alcohol dehydrogenase 2 (ADH2) from Zea mays (Maize).